Consider the following 756-residue polypeptide: Pro-neuregulin-2, membrane-bound isoform (756 aa).

The propeptide occupies 1–19 (MRRDPAPGFSMLLFGVSLA). Over 20–315 (CYSPSLKSVQ…KEAEELYQKR (296 aa)) the chain is Extracellular. Residues asparagine 55, asparagine 186, and asparagine 254 are each glycosylated (N-linked (GlcNAc...) asparagine). The Ig-like C2-type domain maps to 145 to 240 (PKLKKMKSQT…RGRLHVNSVS (96 aa)). 4 disulfides stabilise this stretch: cysteine 165–cysteine 219, cysteine 253–cysteine 267, cysteine 261–cysteine 278, and cysteine 280–cysteine 289. Positions 249–290 (HARKCNETAKSYCVNGGVCYYIEGINQLSCKCPVGYTGDRCQ) constitute an EGF-like domain. Asparagine 296 is a glycosylation site (N-linked (GlcNAc...) asparagine). Residues 316-336 (VLTITGICVALLVVGIVCVVA) form a helical membrane-spanning segment. Over 337–756 (YCKTKKQRRQ…TRAKQDSGPL (420 aa)) the chain is Cytoplasmic. 4 disordered regions span residues 402 to 439 (TFSG…SESL), 557 to 578 (LLRH…DMQR), 608 to 694 (ASPF…DGAL), and 711 to 756 (LRSD…SGPL). Over residues 404-416 (SGSHSCSPSHHCS) the composition is skewed to low complexity. Residues 424-437 (HRHESHTWSLERSE) show a composition bias toward basic and acidic residues. The segment covering 654 to 682 (LNGLAAQRARAARDSLSLSSGSGCGSASA) has biased composition (low complexity).

Belongs to the neuregulin family. In terms of assembly, interacts with ERBB3 and ERBB4. Proteolytic cleavage close to the plasma membrane on the external face leads to the release of the soluble growth factor form. Post-translationally, extensive glycosylation precedes the proteolytic cleavage. As to expression, highest expression in the brain, with lower levels in the lung. In the cerebellum, found in granule and Purkinje cells.

It is found in the cell membrane. It localises to the secreted. Functionally, direct ligand for ERBB3 and ERBB4 tyrosine kinase receptors. Concomitantly recruits ERBB1 and ERBB2 coreceptors, resulting in ligand-stimulated tyrosine phosphorylation and activation of the ERBB receptors. May also promote the heterodimerization with the EGF receptor. In Mus musculus (Mouse), this protein is Pro-neuregulin-2, membrane-bound isoform (Nrg2).